Here is a 73-residue protein sequence, read N- to C-terminus: Defensin-like protein 10 (73 aa).

Residues 1 to 28 (MKLSLRLISALLMSVMLLFATGMGPVEA) form the signal peptide. Disulfide bonds link Cys-31–Cys-73, Cys-42–Cys-62, Cys-48–Cys-67, and Cys-52–Cys-69.

It belongs to the DEFL family.

The protein localises to the secreted. Functionally, confers broad-spectrum resistance to pathogens. This Arabidopsis thaliana (Mouse-ear cress) protein is Defensin-like protein 10 (PDF2.6).